Here is a 67-residue protein sequence, read N- to C-terminus: ORF2p protein (67 aa).

An important for viral replication in intestinal cells region spans residues 13 to 18 (WIGHPV). Over 22-38 (AIIYPFVGFIPLSLKEV) the chain traverses the membrane.

The protein localises to the host cytoplasmic vesicle membrane. In terms of biological role, facilitates virus release from intestinal cells in vitro, possibly through the host autophagic pathway. The polypeptide is ORF2p protein (Homo sapiens (Human)).